The chain runs to 174 residues: Mating-type protein ALPHA2 (174 aa).

The segment at residues 108 to 170 (QPYRGHRFTK…NRRRKQKHPP (63 aa)) is a DNA-binding region (homeobox; TALE-type).

It belongs to the TALE/M-ATYP homeobox family. In terms of assembly, forms a heterodimer with A1.

It is found in the nucleus. In terms of biological role, mating type proteins are sequence specific DNA-binding proteins that act as master switches in yeast differentiation by controlling gene expression in a cell type-specific fashion. Transcriptional corepressor that acts in conjunction with A1 to repress transcription of haploid-specific genes and of MATALPHA1. This Nakaseomyces delphensis (Yeast) protein is Mating-type protein ALPHA2 (MATALPHA2).